The primary structure comprises 822 residues: Valine--tRNA ligase (822 aa).

The short motif at 41–51 (PNVTGQLHLGH) is the 'HIGH' region element. The short motif at 511 to 515 (KMSKS) is the 'KMSKS' region element. ATP is bound at residue Lys-514. A coiled-coil region spans residues 765–822 (EQKGRELKEIQFLKSEILRAEKILTNKGFLEKAPREKIDLERTKLEKLKEKLVFYEKK).

The protein belongs to the class-I aminoacyl-tRNA synthetase family. ValS type 1 subfamily. Monomer.

It localises to the cytoplasm. It carries out the reaction tRNA(Val) + L-valine + ATP = L-valyl-tRNA(Val) + AMP + diphosphate. In terms of biological role, catalyzes the attachment of valine to tRNA(Val). As ValRS can inadvertently accommodate and process structurally similar amino acids such as threonine, to avoid such errors, it has a 'posttransfer' editing activity that hydrolyzes mischarged Thr-tRNA(Val) in a tRNA-dependent manner. The protein is Valine--tRNA ligase of Mesomycoplasma hyopneumoniae (strain J / ATCC 25934 / NCTC 10110) (Mycoplasma hyopneumoniae).